The sequence spans 175 residues: Adenine phosphoribosyltransferase (175 aa).

The protein belongs to the purine/pyrimidine phosphoribosyltransferase family. As to quaternary structure, homodimer.

It localises to the cytoplasm. It carries out the reaction AMP + diphosphate = 5-phospho-alpha-D-ribose 1-diphosphate + adenine. Its pathway is purine metabolism; AMP biosynthesis via salvage pathway; AMP from adenine: step 1/1. Its function is as follows. Catalyzes a salvage reaction resulting in the formation of AMP, that is energically less costly than de novo synthesis. The polypeptide is Adenine phosphoribosyltransferase (Lactobacillus johnsonii (strain CNCM I-12250 / La1 / NCC 533)).